Consider the following 320-residue polypeptide: D-amino-acid oxidase (320 aa).

The FAD site is built by Gly18, Gly19, Val20, Ile21, Thr47, Thr48, Ser49, Gly53, Gly54, Leu55, Val161, and Thr176. Positions 220 and 275 each coordinate D-proline. Positions 220 and 275 each coordinate D-serine. Residues Arg275, Gly301, Gly302, Gly304, and Thr306 each coordinate FAD. A D-proline-binding site is contributed by Gly302. Residue Gly302 coordinates D-serine.

This sequence belongs to the DAMOX/DASOX family. Requires FAD as cofactor.

The protein resides in the cytoplasm. It is found in the secreted. The protein localises to the cell wall. The enzyme catalyses a D-alpha-amino acid + O2 + H2O = a 2-oxocarboxylate + H2O2 + NH4(+). It catalyses the reaction D-leucine + O2 + H2O = 4-methyl-2-oxopentanoate + H2O2 + NH4(+). The catalysed reaction is D-valine + O2 + H2O = 3-methyl-2-oxobutanoate + H2O2 + NH4(+). It carries out the reaction D-isoleucine + O2 + H2O = (R)-3-methyl-2-oxopentanoate + H2O2 + NH4(+). The enzyme catalyses D-methionine + O2 + H2O = 4-methylsulfanyl-2-oxobutanoate + H2O2 + NH4(+). In terms of biological role, catalyzes the oxidative deamination of D-amino acids with broad substrate specificity. This Streptomyces coelicolor (strain ATCC BAA-471 / A3(2) / M145) protein is D-amino-acid oxidase.